A 251-amino-acid chain; its full sequence is ATP synthase subunit a, chloroplastic (251 aa).

The next 6 helical transmembrane spans lie at 3 to 23 (IVLL…IANV), 38 to 58 (IHGQ…FLSI), 99 to 119 (VPYI…GALI), 138 to 158 (INTT…AGLN), 203 to 223 (LVVA…LIFL), and 224 to 244 (GLFT…SYIG).

Belongs to the ATPase A chain family. As to quaternary structure, F-type ATPases have 2 components, CF(1) - the catalytic core - and CF(0) - the membrane proton channel. CF(1) has five subunits: alpha(3), beta(3), gamma(1), delta(1), epsilon(1). CF(0) has four main subunits: a, b, b' and c.

The protein localises to the plastid. It is found in the chloroplast thylakoid membrane. In terms of biological role, key component of the proton channel; it plays a direct role in the translocation of protons across the membrane. This chain is ATP synthase subunit a, chloroplastic, found in Euglena gracilis.